We begin with the raw amino-acid sequence, 214 residues long: RNA pyrophosphohydrolase (214 aa).

In terms of domain architecture, Nudix hydrolase spans 6–149; it reads GFRPNVGIIL…KRDVYQLALT (144 aa). A Nudix box motif is present at residues 38-59; that stretch reads GGIKYGETPMQAMYRELHEETG.

Belongs to the Nudix hydrolase family. RppH subfamily. The cofactor is a divalent metal cation.

Accelerates the degradation of transcripts by removing pyrophosphate from the 5'-end of triphosphorylated RNA, leading to a more labile monophosphorylated state that can stimulate subsequent ribonuclease cleavage. The chain is RNA pyrophosphohydrolase from Burkholderia orbicola (strain MC0-3).